Reading from the N-terminus, the 203-residue chain is MFEGPVQDLIDELGKLPGIGPKSAQRIAFHLLSVEPPDIDRLTAVLNRIRDGVKFCEVCGNVSDADRCRICSDPRRDASLVCVVEEPKDVQAVERTREFRGRYHVLGGALDPLSGVGPDQLRIRELLNRIGERVDGVDVAEVIIATDPNTEGEATATYLVRMLRDIPGLTVTRIASGLPMGGDLEFADELTLGRALAGRRAMA.

The C4-type zinc finger occupies 56-71 (CEVCGNVSDADRCRIC). Residues 79-179 (SLVCVVEEPK…TVTRIASGLP (101 aa)) form the Toprim domain.

It belongs to the RecR family.

May play a role in DNA repair. It seems to be involved in an RecBC-independent recombinational process of DNA repair. It may act with RecF and RecO. The protein is Recombination protein RecR of Mycobacterium sp. (strain JLS).